The following is a 150-amino-acid chain: Peptide deformylase (150 aa).

Residues C88 and H130 each contribute to the Fe cation site. E131 is an active-site residue. H134 provides a ligand contact to Fe cation.

This sequence belongs to the polypeptide deformylase family. Fe(2+) serves as cofactor.

It carries out the reaction N-terminal N-formyl-L-methionyl-[peptide] + H2O = N-terminal L-methionyl-[peptide] + formate. Its function is as follows. Removes the formyl group from the N-terminal Met of newly synthesized proteins. Requires at least a dipeptide for an efficient rate of reaction. N-terminal L-methionine is a prerequisite for activity but the enzyme has broad specificity at other positions. The polypeptide is Peptide deformylase (Desulfitobacterium hafniense (strain Y51)).